The primary structure comprises 131 residues: Small ribosomal subunit protein uS8 (131 aa).

The protein belongs to the universal ribosomal protein uS8 family. As to quaternary structure, part of the 30S ribosomal subunit. Contacts proteins S5 and S12.

In terms of biological role, one of the primary rRNA binding proteins, it binds directly to 16S rRNA central domain where it helps coordinate assembly of the platform of the 30S subunit. This chain is Small ribosomal subunit protein uS8, found in Acidovorax sp. (strain JS42).